A 546-amino-acid polypeptide reads, in one-letter code: MAAKDVKFGRTAREKMLRGVDILADAVKVTLGPKGRNVVIEKSFGAPRITKDGVSVAKEVELEDKFENMGAQMLREVASKTNDTAGDGTTTATVLGQAIVQEGAKAVAAGMNPMDLKRGIDLAVNEVVAELLKKAKKINTSEEVAQVGTISANGEAEIGKMIAEAMQKVGNEGVITVEEAKTAETELEVVEGMQFDRGYLSPYFVTNPEKMVADLEDAYILLHEKKLSNLQALLPVLEAVVQTSKPLLIIAEDVEGEALATLVVNKLRGGLKIAAVKAPGFGDRRKAMLEDIAILTGGQVISEDLGIKLESVTLDMLGRAKKVSISKENTTIVDGAGQKAEIDARVGQIKQQIEETTLDYDREKLQERLAKLAGGVAVIRVGGATEVEVKEKKDRVDDALNATRAAVEEGIVAGGGTALLRASTKITAKGVNADQEAGINIVRRAIQAPARQITTNAGEEASVIVGKILENTSETFGYNTANGEYGDLISLGIVDPVKVVRTALQNAASVAGLLITTEAMIAELPKKDAAPAGMPGGMGGMGGMDF.

ATP contacts are provided by residues Thr30–Pro33, Lys51, Asp87–Thr91, Gly415, and Asp495.

It belongs to the chaperonin (HSP60) family. In terms of assembly, forms a cylinder of 14 subunits composed of two heptameric rings stacked back-to-back. Interacts with the co-chaperonin GroES.

It localises to the cytoplasm. It catalyses the reaction ATP + H2O + a folded polypeptide = ADP + phosphate + an unfolded polypeptide.. In terms of biological role, together with its co-chaperonin GroES, plays an essential role in assisting protein folding. The GroEL-GroES system forms a nano-cage that allows encapsulation of the non-native substrate proteins and provides a physical environment optimized to promote and accelerate protein folding. The polypeptide is Chaperonin GroEL (Brucella ovis (strain ATCC 25840 / 63/290 / NCTC 10512)).